A 610-amino-acid chain; its full sequence is Atypical kinase COQ8, mitochondrial (610 aa).

The span at 98–111 shows a compositional bias: basic and acidic residues; sequence GVKHLQEQSSKEIK. Positions 98-144 are disordered; sequence GVKHLQEQSSKEIKNPISQPILPNKKDEISPAKPSAIDSSIKDVTKS.

The protein belongs to the protein kinase superfamily. ADCK protein kinase family.

The protein localises to the mitochondrion. The protein operates within cofactor biosynthesis; ubiquinone biosynthesis. In terms of biological role, atypical kinase involved in the biosynthesis of coenzyme Q, also named ubiquinone, an essential lipid-soluble electron transporter for aerobic cellular respiration. Its substrate specificity is still unclear: may act as a protein kinase that mediates phosphorylation of coq3. According to other reports, acts as a small molecule kinase, possibly a lipid kinase that phosphorylates a prenyl lipid in the ubiquinone biosynthesis pathway, as suggested by its ability to bind coenzyme Q lipid intermediates. This chain is Atypical kinase COQ8, mitochondrial, found in Schizosaccharomyces pombe (strain 972 / ATCC 24843) (Fission yeast).